Here is a 245-residue protein sequence, read N- to C-terminus: GDSL esterase/lipase At4g16220 (245 aa).

The signal sequence occupies residues 1 to 24 (MSSLVSRCQVIALLVLFFFGVCLA). Ser37 (nucleophile) is an active-site residue.

The protein belongs to the 'GDSL' lipolytic enzyme family.

It is found in the secreted. The polypeptide is GDSL esterase/lipase At4g16220 (Arabidopsis thaliana (Mouse-ear cress)).